We begin with the raw amino-acid sequence, 139 residues long: Large ribosomal subunit protein uL16 (139 aa).

A compositionally biased stretch (basic residues) spans 1–17 (MLIPRKVKHRKQHHPGR). Residues 1-24 (MLIPRKVKHRKQHHPGRTGHATGG) are disordered.

The protein belongs to the universal ribosomal protein uL16 family. In terms of assembly, part of the 50S ribosomal subunit.

Binds 23S rRNA and is also seen to make contacts with the A and possibly P site tRNAs. The protein is Large ribosomal subunit protein uL16 of Clavibacter michiganensis subsp. michiganensis (strain NCPPB 382).